A 448-amino-acid chain; its full sequence is UDP-N-acetylmuramoylalanine--D-glutamate ligase (448 aa).

G116–T122 contributes to the ATP binding site.

The protein belongs to the MurCDEF family.

Its subcellular location is the cytoplasm. The enzyme catalyses UDP-N-acetyl-alpha-D-muramoyl-L-alanine + D-glutamate + ATP = UDP-N-acetyl-alpha-D-muramoyl-L-alanyl-D-glutamate + ADP + phosphate + H(+). Its pathway is cell wall biogenesis; peptidoglycan biosynthesis. In terms of biological role, cell wall formation. Catalyzes the addition of glutamate to the nucleotide precursor UDP-N-acetylmuramoyl-L-alanine (UMA). In Pseudomonas savastanoi pv. phaseolicola (strain 1448A / Race 6) (Pseudomonas syringae pv. phaseolicola (strain 1448A / Race 6)), this protein is UDP-N-acetylmuramoylalanine--D-glutamate ligase.